A 102-amino-acid polypeptide reads, in one-letter code: MNVLSYFTWFVHLSSVLEWLNIIYFFLLYTKLKKNLSLKTFIFSFFISFCSALCACTLHFFNNQSFYYFLINLQSFLTLFANITLYFSILIYKQQILKNQNY.

Transmembrane regions (helical) follow at residues 9-29, 41-61, and 71-91; these read WFVH…FLLY, FIFS…LHFF, and INLQ…SILI.

It belongs to the ycf49 family.

The protein localises to the plastid. It is found in the cyanelle membrane. This is an uncharacterized protein from Cyanophora paradoxa.